A 286-amino-acid chain; its full sequence is Phosphatidylserine decarboxylase proenzyme (286 aa).

Residues aspartate 90, histidine 147, and serine 250 each act as charge relay system; for autoendoproteolytic cleavage activity in the active site. The active-site Schiff-base intermediate with substrate; via pyruvic acid; for decarboxylase activity is the serine 250. A Pyruvic acid (Ser); by autocatalysis modification is found at serine 250.

This sequence belongs to the phosphatidylserine decarboxylase family. PSD-B subfamily. Prokaryotic type I sub-subfamily. In terms of assembly, heterodimer of a large membrane-associated beta subunit and a small pyruvoyl-containing alpha subunit. Pyruvate is required as a cofactor. Post-translationally, is synthesized initially as an inactive proenzyme. Formation of the active enzyme involves a self-maturation process in which the active site pyruvoyl group is generated from an internal serine residue via an autocatalytic post-translational modification. Two non-identical subunits are generated from the proenzyme in this reaction, and the pyruvate is formed at the N-terminus of the alpha chain, which is derived from the carboxyl end of the proenzyme. The autoendoproteolytic cleavage occurs by a canonical serine protease mechanism, in which the side chain hydroxyl group of the serine supplies its oxygen atom to form the C-terminus of the beta chain, while the remainder of the serine residue undergoes an oxidative deamination to produce ammonia and the pyruvoyl prosthetic group on the alpha chain. During this reaction, the Ser that is part of the protease active site of the proenzyme becomes the pyruvoyl prosthetic group, which constitutes an essential element of the active site of the mature decarboxylase.

The protein localises to the cell membrane. The catalysed reaction is a 1,2-diacyl-sn-glycero-3-phospho-L-serine + H(+) = a 1,2-diacyl-sn-glycero-3-phosphoethanolamine + CO2. It participates in phospholipid metabolism; phosphatidylethanolamine biosynthesis; phosphatidylethanolamine from CDP-diacylglycerol: step 2/2. Catalyzes the formation of phosphatidylethanolamine (PtdEtn) from phosphatidylserine (PtdSer). The sequence is that of Phosphatidylserine decarboxylase proenzyme from Saccharophagus degradans (strain 2-40 / ATCC 43961 / DSM 17024).